Here is a 268-residue protein sequence, read N- to C-terminus: Ribosomal RNA small subunit methyltransferase A (268 aa).

Residues Asn18, Leu20, Gly45, Glu66, Asp91, and Asn112 each contribute to the S-adenosyl-L-methionine site.

It belongs to the class I-like SAM-binding methyltransferase superfamily. rRNA adenine N(6)-methyltransferase family. RsmA subfamily.

It is found in the cytoplasm. It catalyses the reaction adenosine(1518)/adenosine(1519) in 16S rRNA + 4 S-adenosyl-L-methionine = N(6)-dimethyladenosine(1518)/N(6)-dimethyladenosine(1519) in 16S rRNA + 4 S-adenosyl-L-homocysteine + 4 H(+). Specifically dimethylates two adjacent adenosines (A1518 and A1519) in the loop of a conserved hairpin near the 3'-end of 16S rRNA in the 30S particle. May play a critical role in biogenesis of 30S subunits. The polypeptide is Ribosomal RNA small subunit methyltransferase A (Vibrio vulnificus (strain CMCP6)).